The primary structure comprises 512 residues: Maturase K (512 aa).

Belongs to the intron maturase 2 family. MatK subfamily.

Its subcellular location is the plastid. The protein localises to the chloroplast. Usually encoded in the trnK tRNA gene intron. Probably assists in splicing its own and other chloroplast group II introns. The protein is Maturase K of Oenothera parviflora (Small-flowered evening primrose).